The primary structure comprises 326 residues: WD repeat-containing protein slr1409 (326 aa).

WD repeat units follow at residues 47 to 77, 88 to 118, 129 to 159, 169 to 199, 210 to 240, and 252 to 282; these read GSDV…TLWT, GQKP…RLWN, PHRA…KIFT, LKSG…HLIN, TGQG…KLWN, and VPTG…RFWQ.

The polypeptide is WD repeat-containing protein slr1409 (Synechocystis sp. (strain ATCC 27184 / PCC 6803 / Kazusa)).